A 61-amino-acid polypeptide reads, in one-letter code: [Thr6, Val10, Asp11]-phyllokinin (61 aa).

A signal peptide spans 1-22; the sequence is MSFLKKSLFLVLFLGLVSFSIC. Residues 23–50 constitute a propeptide that is removed on maturation; that stretch reads EEEKRETEEEENEDEMNEESEEKRESPE. A disordered region spans residues 24 to 61; that stretch reads EEKRETEEEENEDEMNEESEEKRESPERPPGFTPFRVD. A compositionally biased stretch (acidic residues) spans 30-42; sequence EEEENEDEMNEES.

The protein belongs to the frog skin active peptide (FSAP) family. Bradykinin-related peptide subfamily. Expressed by the skin glands.

The protein localises to the secreted. Functionally, induces relaxation of rat smooth muscle from tail artery and contraction of that from ileum, urinary bladder and uterus. Binds to both bradykinin receptor B1 (BDKRB1) and B2 (BDKRB2). This chain is [Thr6, Val10, Asp11]-phyllokinin, found in Agalychnis spurrelli (Gliding leaf frog).